The primary structure comprises 224 residues: Small ribosomal subunit protein uS3 (224 aa).

One can recognise a KH type-2 domain in the interval 39–107 (IREFLKKKPS…DVWVEIAEVK (69 aa)).

Belongs to the universal ribosomal protein uS3 family. Part of the 30S ribosomal subunit. Forms a tight complex with proteins S10 and S14.

Binds the lower part of the 30S subunit head. Binds mRNA in the 70S ribosome, positioning it for translation. The polypeptide is Small ribosomal subunit protein uS3 (Chlamydia trachomatis serovar L2 (strain ATCC VR-902B / DSM 19102 / 434/Bu)).